A 489-amino-acid polypeptide reads, in one-letter code: EGF-like domain-containing protein 2 (489 aa).

The first 23 residues, 1–23 (MMQTLLRGLCVVVLFWGYIKASA), serve as a signal peptide directing secretion. The 37-residue stretch at 73-109 (PATLCDPPCLNGGQCFEPTADTYMCMCSEAFYGSQCE) folds into the EGF-like domain. 3 disulfide bridges follow: cysteine 77–cysteine 87, cysteine 81–cysteine 97, and cysteine 99–cysteine 108. The ZP domain maps to 116 to 370 (ECSGDQITIN…GSCPTPAPPA (255 aa)). N-linked (GlcNAc...) asparagine glycosylation occurs at asparagine 229. Disordered regions lie at residues 358–389 (CEPG…AASD) and 404–425 (RSNE…QNAD). Positions 363–374 (CPTPAPPAPVQP) are enriched in pro residues. Basic and acidic residues predominate over residues 404-420 (RSNEKLRLPHNKSDKKS). Residues asparagine 414 and asparagine 479 are each glycosylated (N-linked (GlcNAc...) asparagine).

In terms of tissue distribution, component of the acid-insoluble organic matrix of calcified layers of the shell (at protein level).

It is found in the secreted. This is EGF-like domain-containing protein 2 from Lottia gigantea (Giant owl limpet).